The chain runs to 463 residues: L-seryl-tRNA(Sec) selenium transferase (463 aa).

Lys295 carries the N6-(pyridoxal phosphate)lysine modification.

It belongs to the SelA family. In terms of assembly, homodecamer; pentamer of dimers. Binds only one seryl-tRNA(Sec) per dimer. Pyridoxal 5'-phosphate is required as a cofactor.

It is found in the cytoplasm. The enzyme catalyses L-seryl-tRNA(Sec) + selenophosphate + H(+) = L-selenocysteinyl-tRNA(Sec) + phosphate. It participates in aminoacyl-tRNA biosynthesis; selenocysteinyl-tRNA(Sec) biosynthesis; selenocysteinyl-tRNA(Sec) from L-seryl-tRNA(Sec) (bacterial route): step 1/1. Converts seryl-tRNA(Sec) to selenocysteinyl-tRNA(Sec) required for selenoprotein biosynthesis. The sequence is that of L-seryl-tRNA(Sec) selenium transferase from Shigella boydii serotype 4 (strain Sb227).